The chain runs to 150 residues: MSLTIDVKILDNRLHHMLPSYATPGSAGLDLRACTEHTQTLAPGETIMIPTGMAIHLADPHYAALILPRSGLGHKHGIVLGNLVGLIDSDYQGQLLVSCWNRGKESFILNPLERIAQLVIVPVMQANFNIVDDFQASERGTGGFGSTGRQ.

Substrate-binding positions include 69–71, N82, and 86–88; these read RSG and LID.

The protein belongs to the dUTPase family. Requires Mg(2+) as cofactor.

It catalyses the reaction dUTP + H2O = dUMP + diphosphate + H(+). It participates in pyrimidine metabolism; dUMP biosynthesis; dUMP from dCTP (dUTP route): step 2/2. In terms of biological role, this enzyme is involved in nucleotide metabolism: it produces dUMP, the immediate precursor of thymidine nucleotides and it decreases the intracellular concentration of dUTP so that uracil cannot be incorporated into DNA. In Methylobacillus flagellatus (strain ATCC 51484 / DSM 6875 / VKM B-1610 / KT), this protein is Deoxyuridine 5'-triphosphate nucleotidohydrolase.